An 884-amino-acid chain; its full sequence is MHPFSRLFRNIQSLGEEEVQELLGPPEDALPLLAGEDLNHRVADALNLHLPTADLQWVHKTNAITGLYSNQAAQFNPHWIQPEFPELHLHNDLIQKLQQYFGPLTINEKRKLQLNFPARFFPKATKYFPLIKGIKNNYPNFALEHFFATANYLWTLWEAGILYLRKNQTTLTFKGKPYSWEHRQLVQHNGQQHKSHLQSRQNSSMVACSGHLLHNHLPSEPVSVSTRNLSNNISDKSQKSTRTGLCSYKQVQTDRLEHLARISCGSKITIGQQGSSPKTSYKSISSNFRNQTWAYNSSRNSGHTTWFSSASNSNKSRSREKAYSSNSTSQRYSPPLNYEKSDFSSPGVRGRITRLDNNGTLPQCLWRSFYNTKPCGSYCIHHIVSSLDDWGPCTVTGDVTIKSPRTPRRITGGVFLVDKNPNNSSESRLVVDFSQFSRGHTRVHWPKFAVPNLQTLANLLSTNLQWLSLDVSAAFYHIPISPAAVPHLLVGSPGLERFNTCMSSSTHNGNDSQLQTMHALCTRHVYSSLLLLFKTYGRKLHLLAHPFIMGFRKLPMGVGLSPFLLAQFTSAIASMVRRNFPHCVVFAYMDDLVLGARTSEHLTAIYSHICSVFLDLGIHLNVNKTKWWGNHLHFMGYVITSSGVLPQDKHVKKLSRYLRSVPVNQPLDYKICERLTGILNYVAPFTLCGYAALMPLYHAIASRTAFIFSSLYKSWLLSLYEELWPVVRQRGVVCTVFADATPTGWGIATTCQLLSGTFAFPLPIATAELIAACLARCWTGARLLGTDNSVVLSGKLTSFPWLLACVANWILRGTSFCYVPSALNPADLPSRGLLPVLRPLPRLRLRPQTSRISLWAASPPVSPRRPVRVAWSSPVQTCEPWIPP.

Residues 1–184 (MHPFSRLFRN…GKPYSWEHRQ (184 aa)) are terminal protein domain (TP). The interval 185–387 (LVQHNGQQHK…YCIHHIVSSL (203 aa)) is spacer. Disordered regions lie at residues 218–241 (PSEP…QKST) and 299–345 (RNSG…DFSS). Composition is skewed to polar residues over residues 222–241 (VSVS…QKST) and 323–332 (YSSNSTSQRY). The polymerase/reverse transcriptase domain (RT) stretch occupies residues 388-729 (DDWGPCTVTG…YEELWPVVRQ (342 aa)). The Reverse transcriptase domain occupies 398 to 639 (DVTIKSPRTP…NHLHFMGYVI (242 aa)). Mg(2+) contacts are provided by Asp470, Asp590, and Asp591.

Belongs to the hepadnaviridae P protein family.

The enzyme catalyses DNA(n) + a 2'-deoxyribonucleoside 5'-triphosphate = DNA(n+1) + diphosphate. It carries out the reaction Endonucleolytic cleavage to 5'-phosphomonoester.. Its activity is regulated as follows. Activated by host HSP70 and HSP40 in vitro to be able to bind the epsilon loop of the pgRNA. Because deletion of the RNase H region renders the protein partly chaperone-independent, the chaperones may be needed indirectly to relieve occlusion of the RNA-binding site by this domain. Inhibited by several reverse-transcriptase inhibitors: Lamivudine, Adefovir and Entecavir. Functionally, multifunctional enzyme that converts the viral RNA genome into dsDNA in viral cytoplasmic capsids. This enzyme displays a DNA polymerase activity that can copy either DNA or RNA templates, and a ribonuclease H (RNase H) activity that cleaves the RNA strand of RNA-DNA heteroduplexes in a partially processive 3'- to 5'-endonucleasic mode. Neo-synthesized pregenomic RNA (pgRNA) are encapsidated together with the P protein, and reverse-transcribed inside the nucleocapsid. Initiation of reverse-transcription occurs first by binding the epsilon loop on the pgRNA genome, and is initiated by protein priming, thereby the 5'-end of (-)DNA is covalently linked to P protein. Partial (+)DNA is synthesized from the (-)DNA template and generates the relaxed circular DNA (RC-DNA) genome. After budding and infection, the RC-DNA migrates in the nucleus, and is converted into a plasmid-like covalently closed circular DNA (cccDNA). The activity of P protein does not seem to be necessary for cccDNA generation, and is presumably released from (+)DNA by host nuclear DNA repair machinery. The chain is Protein P from Marmota monax (Woodchuck).